A 309-amino-acid chain; its full sequence is Probable HTH-type transcriptional regulator LtrA (309 aa).

One can recognise an HTH lysR-type domain in the interval 1 to 61; the sequence is MNLNLLPDLA…QRTTRKLRLS (61 aa). Residues 21-40 constitute a DNA-binding region (H-T-H motif); sequence FSAVARQNGITPSAVSRSVS.

The protein belongs to the LysR transcriptional regulatory family.

The protein is Probable HTH-type transcriptional regulator LtrA (ltrA) of Klebsiella pneumoniae.